A 200-amino-acid chain; its full sequence is Large ribosomal subunit protein uL13 (200 aa).

Belongs to the universal ribosomal protein uL13 family. In terms of assembly, component of the large ribosomal subunit. Mature ribosomes consist of a small (40S) and a large (60S) subunit. The 40S subunit contains about 32 different proteins and 1 molecule of RNA (18S). The 60S subunit contains 45 different proteins and 3 molecules of RNA (25S, 5.8S and 5S).

It localises to the cytoplasm. Functionally, component of the ribosome, a large ribonucleoprotein complex responsible for the synthesis of proteins in the cell. The small ribosomal subunit (SSU) binds messenger RNAs (mRNAs) and translates the encoded message by selecting cognate aminoacyl-transfer RNA (tRNA) molecules. The large subunit (LSU) contains the ribosomal catalytic site termed the peptidyl transferase center (PTC), which catalyzes the formation of peptide bonds, thereby polymerizing the amino acids delivered by tRNAs into a polypeptide chain. The nascent polypeptides leave the ribosome through a tunnel in the LSU and interact with protein factors that function in enzymatic processing, targeting, and the membrane insertion of nascent chains at the exit of the ribosomal tunnel. The protein is Large ribosomal subunit protein uL13 of Candida albicans (strain SC5314 / ATCC MYA-2876) (Yeast).